The following is a 207-amino-acid chain: NADH-quinone oxidoreductase subunit C (207 aa).

It belongs to the complex I 30 kDa subunit family. NDH-1 is composed of 14 different subunits. Subunits NuoB, C, D, E, F, and G constitute the peripheral sector of the complex.

It localises to the cell inner membrane. It carries out the reaction a quinone + NADH + 5 H(+)(in) = a quinol + NAD(+) + 4 H(+)(out). Functionally, NDH-1 shuttles electrons from NADH, via FMN and iron-sulfur (Fe-S) centers, to quinones in the respiratory chain. The immediate electron acceptor for the enzyme in this species is believed to be ubiquinone. Couples the redox reaction to proton translocation (for every two electrons transferred, four hydrogen ions are translocated across the cytoplasmic membrane), and thus conserves the redox energy in a proton gradient. In Rickettsia felis (strain ATCC VR-1525 / URRWXCal2) (Rickettsia azadi), this protein is NADH-quinone oxidoreductase subunit C.